A 488-amino-acid chain; its full sequence is GTPase Der (488 aa).

EngA-type G domains are found at residues 3-166 (PVVA…AEAM) and 199-372 (IKLA…DSAT). GTP contacts are provided by residues 9–16 (GRPNVGKS), 56–60 (DTGGI), 118–121 (NKVD), 205–212 (GKPNVGKS), 252–256 (DTAGV), and 317–320 (NKWD). In terms of domain architecture, KH-like spans 373-457 (RRVSTSMLTR…PIQLRFQEGD (85 aa)). A disordered region spans residues 469 to 488 (MSQERRRKRALSHIKDRKTK). Basic residues predominate over residues 473–488 (RRRKRALSHIKDRKTK).

This sequence belongs to the TRAFAC class TrmE-Era-EngA-EngB-Septin-like GTPase superfamily. EngA (Der) GTPase family. Associates with the 50S ribosomal subunit.

In terms of biological role, GTPase that plays an essential role in the late steps of ribosome biogenesis. The polypeptide is GTPase Der (Shewanella putrefaciens (strain CN-32 / ATCC BAA-453)).